The sequence spans 186 residues: Glutathione S-transferase 1, isoform A (186 aa).

In terms of domain architecture, GST N-terminal spans 1–81; that stretch reads MDFYYLPGSA…YLVEKYCAHD (81 aa). Glutathione contacts are provided by residues S9, 50-52, and 65-67; these read HCI and ESR. In terms of domain architecture, GST C-terminal spans 92–186; the sequence is DPRRRAVVHQ…RRCRVRSAAI (95 aa).

Belongs to the GST superfamily. Theta family. Homodimer.

The catalysed reaction is RX + glutathione = an S-substituted glutathione + a halide anion + H(+). Functionally, conjugation of reduced glutathione to a wide number of exogenous and endogenous hydrophobic electrophiles. The polypeptide is Glutathione S-transferase 1, isoform A (Anopheles gambiae (African malaria mosquito)).